A 98-amino-acid chain; its full sequence is Molybdopterin synthase sulfur carrier subunit (98 aa).

Glycine 98 carries the 1-thioglycine; alternate modification. A Glycyl adenylate; alternate modification is found at glycine 98.

Belongs to the MoaD family. MOCS2A subfamily. Heterotetramer; composed of 2 small (MOCS2A) and 2 large (MOCS2B) subunits. In terms of processing, C-terminal thiocarboxylation occurs in 2 steps, it is first acyl-adenylated (-COAMP) via the hesA/moeB/thiF part of MOCS3, then thiocarboxylated (-COSH) via the rhodanese domain of MOCS3.

It is found in the cytoplasm. The protein operates within cofactor biosynthesis; molybdopterin biosynthesis. Functionally, acts as a sulfur carrier required for molybdopterin biosynthesis. Component of the molybdopterin synthase complex that catalyzes the conversion of precursor Z into molybdopterin by mediating the incorporation of 2 sulfur atoms into precursor Z to generate a dithiolene group. In the complex, serves as sulfur donor by being thiocarboxylated (-COSH) at its C-terminus by MOCS3. After interaction with MOCS2B, the sulfur is then transferred to precursor Z to form molybdopterin. This chain is Molybdopterin synthase sulfur carrier subunit, found in Aedes aegypti (Yellowfever mosquito).